The following is a 682-amino-acid chain: Methionine synthase reductase (682 aa).

The region spanning 4–147 (FLIAFGSQTG…EVEPWIEKFF (144 aa)) is the Flavodoxin-like domain. An FMN-binding site is contributed by 93–124 (LLGLGDSNYSSYQTIPRKIDKQLTALGANRLF). An FAD-binding FR-type domain is found at 271 to 516 (TKPFEVLVVS…GKEPARFRLP (246 aa)). Lys-293 is an NADP(+) binding site. FAD-binding positions include 455–458 (RPYS) and 488–491 (GLAT). NADP(+) is bound by residues 607–609 (RVQ) and Asp-643. Trp-681 is an FAD binding site.

It depends on FAD as a cofactor. Requires FMN as cofactor.

The catalysed reaction is 2 methylcob(III)alamin-[methionine synthase] + 2 S-adenosyl-L-homocysteine + NADP(+) + H(+) = 2 cob(II)alamin-[methionine synthase] + 2 S-adenosyl-L-methionine + NADPH. In terms of biological role, involved in the reductive regeneration of cob(I)alamin cofactor required for the maintenance of methionine synthase in a functional state. This chain is Methionine synthase reductase, found in Caenorhabditis elegans.